Reading from the N-terminus, the 78-residue chain is D-alanyl carrier protein (78 aa).

The 78-residue stretch at 1-78 (MAFRENVLEI…MIITQLEALK (78 aa)) folds into the Carrier domain. An O-(pantetheine 4'-phosphoryl)serine modification is found at serine 36.

This sequence belongs to the DltC family. Post-translationally, 4'-phosphopantetheine is transferred from CoA to a specific serine of apo-DCP.

It is found in the cytoplasm. Its pathway is cell wall biogenesis; lipoteichoic acid biosynthesis. In terms of biological role, carrier protein involved in the D-alanylation of lipoteichoic acid (LTA). The loading of thioester-linked D-alanine onto DltC is catalyzed by D-alanine--D-alanyl carrier protein ligase DltA. The DltC-carried D-alanyl group is further transferred to cell membrane phosphatidylglycerol (PG) by forming an ester bond, probably catalyzed by DltD. D-alanylation of LTA plays an important role in modulating the properties of the cell wall in Gram-positive bacteria, influencing the net charge of the cell wall. In Listeria monocytogenes serotype 4a (strain HCC23), this protein is D-alanyl carrier protein.